We begin with the raw amino-acid sequence, 142 residues long: Clock-controlled protein 6 (142 aa).

This sequence belongs to the SED1 family.

The chain is Clock-controlled protein 6 (ccg-6) from Neurospora crassa (strain ATCC 24698 / 74-OR23-1A / CBS 708.71 / DSM 1257 / FGSC 987).